The following is a 350-amino-acid chain: MADVSVLINGYGTIGKRVADAVDAQRDMEVLGVVKTSPDYLARLAVEEYGYPLFVPEDRVERFEDAGIETEGTVEDVVLNAEDYGLDVVVDCTPEGIGARNKETLYEKAGVKAIFQGGEEAEVAEVSFVAQCNYEEALGADYVRCVSCNTTALCRTLGTLKEEFELGRVYVTIVRRAADPHQVKKGPINAIAPNPVTVPSHHGPDVKTVMPDIDITTAAVKVPTTLMHMHVVRVELKEEVTSDDVIDAFEEARRIWVVPHGEGLGSTAELIELGRDLGRKRYDLYEILVWEESINVEDGVLYYMQAVHQEADVVPENVDAIRAMTELEEDPEASMDATDSALGVLNSPPL.

Residues 13–14 (TI) and G118 each bind NAD(+). 147-149 (SCN) provides a ligand contact to D-glyceraldehyde 3-phosphate. C148 serves as the catalytic Nucleophile. R176 contributes to the NAD(+) binding site. D-glyceraldehyde 3-phosphate is bound at residue 202–203 (HG). Residue Q309 coordinates NAD(+). Positions 327 to 350 (LEEDPEASMDATDSALGVLNSPPL) are disordered.

The protein belongs to the glyceraldehyde-3-phosphate dehydrogenase family. Homotetramer.

Its subcellular location is the cytoplasm. It carries out the reaction D-glyceraldehyde 3-phosphate + phosphate + NADP(+) = (2R)-3-phospho-glyceroyl phosphate + NADPH + H(+). It catalyses the reaction D-glyceraldehyde 3-phosphate + phosphate + NAD(+) = (2R)-3-phospho-glyceroyl phosphate + NADH + H(+). It functions in the pathway carbohydrate degradation; glycolysis; pyruvate from D-glyceraldehyde 3-phosphate: step 1/5. In Methanopyrus kandleri (strain AV19 / DSM 6324 / JCM 9639 / NBRC 100938), this protein is Glyceraldehyde-3-phosphate dehydrogenase.